A 288-amino-acid polypeptide reads, in one-letter code: Borealin (288 aa).

The segment at 1–58 (MAPKKRSSRGTRTNTLRSRKLASFLKDFDREVQVRTKQIESDRQTLLKEVENLYNIEV) is required for interaction with INCENP. The required for centromere localization stretch occupies residues 1-88 (MAPKKRSSRG…NRQALEEAAT (88 aa)). The segment at 1–149 (MAPKKRSSRG…RKSHKNLRSA (149 aa)) is required for interaction with SENP3. Residues 10–109 (GTRTNTLRSR…TAEAIQTPLK (100 aa)) form a required to form a minimal CPC core complex that localizes to the central spindle and midbody and properly executes the role of the CPC during cytokinesis region. Residues 20-78 (KLASFLKDFDREVQVRTKQIESDRQTLLKEVENLYNIEVLRLPKALQVMKWLDYFALGG) form a required for interaction with INCENP and BIRC5 region. Thr-88 is modified (phosphothreonine; by TTK). A Citrulline modification is found at Arg-91. Phosphothreonine; by TTK is present on Thr-94. Thr-106 bears the Phosphothreonine mark. Residue Ser-110 is modified to Phosphoserine. A compositionally biased stretch (acidic residues) spans 124–134 (KEEEEDEEEEG). The tract at residues 124-173 (KEEEEDEEEEGGGGGGRKSHKNLRSARVKRCPPSKKRTQSIQGRSRSKRL) is disordered. Over residues 140–161 (RKSHKNLRSARVKRCPPSKKRT) the composition is skewed to basic residues. A Glycyl lysine isopeptide (Lys-Gly) (interchain with G-Cter in SUMO2) cross-link involves residue Lys-144. Ser-174 bears the Phosphoserine; by AURKB mark. Thr-197 and Thr-212 each carry phosphothreonine. Residues Ser-227, Ser-232, Ser-246, and Ser-252 each carry the phosphoserine modification.

This sequence belongs to the borealin family. As to quaternary structure, may form homooligomers and homodimers. Component of the chromosomal passenger complex (CPC) composed of at least BIRC5/survivin, CDCA8/borealin, INCENP, AURKB or AURKC; in the complex forms a triple-helix bundle-based subcomplex with INCENP and BIRC5. Interacts with SENP3, UBE2I and RANBP2. Interacts (phosphorylated) with SGO1 and SGO2; the association is dependent on CDK1. In terms of processing, phosphorylated by TTK, essentially at Thr-88 and Thr-94. Phosphorylation (probably by CDK1) promotes targeting of the CPC to centromeric DNA. Post-translationally, sumoylated by UBE2I and RANBP2. Desumoylated by SENP3 through the removal of SUMO2 and SUMO3. Citrullinated by PADI4.

Its subcellular location is the nucleus. It localises to the nucleolus. The protein resides in the cytoplasm. The protein localises to the chromosome. It is found in the centromere. Its subcellular location is the cytoskeleton. It localises to the spindle. Component of the chromosomal passenger complex (CPC), a complex that acts as a key regulator of mitosis. The CPC complex has essential functions at the centromere in ensuring correct chromosome alignment and segregation and is required for chromatin-induced microtubule stabilization and spindle assembly. In the complex, it may be required to direct the CPC to centromeric DNA. The sequence is that of Borealin (Cdca8) from Rattus norvegicus (Rat).